The chain runs to 388 residues: Leucine aminopeptidase 1 (388 aa).

The signal sequence occupies residues 1–19 (MKVLTAIALSAIAFTGAVA). Residues 20 to 88 (AVITQEAFLN…YPTLHSASYV (69 aa)) constitute a propeptide that is removed on maturation. N-linked (GlcNAc...) asparagine glycosylation is found at Asn106 and Asn180. 2 residues coordinate Zn(2+): His188 and Asp207. N-linked (GlcNAc...) asparagine glycosylation occurs at Asn232. 2 residues coordinate Zn(2+): Glu246 and Asp273. A disulfide bridge connects residues Cys322 and Cys326. A Zn(2+)-binding site is contributed by His355.

Belongs to the peptidase M28 family. M28E subfamily. Monomer. It depends on Zn(2+) as a cofactor.

It localises to the secreted. Its function is as follows. Extracellular aminopeptidase that allows assimilation of proteinaceous substrates and which contributes to pathogenicity. The protein is Leucine aminopeptidase 1 (lap1) of Aspergillus fumigatus (strain CBS 144.89 / FGSC A1163 / CEA10) (Neosartorya fumigata).